The following is a 352-amino-acid chain: Nicotinate-nucleotide--dimethylbenzimidazole phosphoribosyltransferase (352 aa).

The active-site Proton acceptor is the Glu-318.

The protein belongs to the CobT family.

It catalyses the reaction 5,6-dimethylbenzimidazole + nicotinate beta-D-ribonucleotide = alpha-ribazole 5'-phosphate + nicotinate + H(+). Its pathway is nucleoside biosynthesis; alpha-ribazole biosynthesis; alpha-ribazole from 5,6-dimethylbenzimidazole: step 1/2. Its function is as follows. Catalyzes the synthesis of alpha-ribazole-5'-phosphate from nicotinate mononucleotide (NAMN) and 5,6-dimethylbenzimidazole (DMB). The polypeptide is Nicotinate-nucleotide--dimethylbenzimidazole phosphoribosyltransferase (Azotobacter vinelandii (strain DJ / ATCC BAA-1303)).